A 473-amino-acid chain; its full sequence is GTPase Der (473 aa).

2 EngA-type G domains span residues 5–170 (PVVA…PNQE) and 178–351 (LKLA…QSSM). GTP is bound by residues 11–18 (GRPNVGKS), 58–62 (DTGGI), 123–126 (NKVD), 184–191 (GRPNVGKS), 231–235 (DTAGV), and 296–299 (NKWD). One can recognise a KH-like domain in the interval 352–436 (FEVSTNRLTQ…PLNVVFKLNE (85 aa)). A compositionally biased stretch (polar residues) spans 438-454 (PYANKSDTPTKAKTQQL). Positions 438-473 (PYANKSDTPTKAKTQQLRQRERNRAQKFTTKDKKPR) are disordered. Residues 455–473 (RQRERNRAQKFTTKDKKPR) show a composition bias toward basic and acidic residues.

This sequence belongs to the TRAFAC class TrmE-Era-EngA-EngB-Septin-like GTPase superfamily. EngA (Der) GTPase family. In terms of assembly, associates with the 50S ribosomal subunit.

In terms of biological role, GTPase that plays an essential role in the late steps of ribosome biogenesis. The polypeptide is GTPase Der (Psychrobacter arcticus (strain DSM 17307 / VKM B-2377 / 273-4)).